The sequence spans 1133 residues: Myb-binding protein 1A (1133 aa).

Disordered regions lie at residues 1 to 62 (MKSK…ENTA), 718 to 764 (PLSK…DAES), 924 to 943 (GEEH…SRQA), and 1111 to 1133 (KKVA…EEST). Composition is skewed to basic and acidic residues over residues 20 to 35 (KAKE…KSEA) and 50 to 60 (EKPAETEEKEN). Acidic residues-rich tracts occupy residues 725–735 (GEEESDDELDK) and 744–762 (DDSE…EDDA).

This sequence belongs to the MYBBP1A family. In terms of assembly, interacts with nclb.

It is found in the cytoplasm. Its subcellular location is the nucleus. It localises to the nucleolus. Functionally, has a role in rRNA biogenesis, cell proliferation and tissue growth by contributing to the localization of nclb to the nucleolus. In Drosophila melanogaster (Fruit fly), this protein is Myb-binding protein 1A.